The chain runs to 98 residues: Integration host factor subunit beta (98 aa).

Belongs to the bacterial histone-like protein family. As to quaternary structure, heterodimer of an alpha and a beta chain.

Functionally, this protein is one of the two subunits of integration host factor, a specific DNA-binding protein that functions in genetic recombination as well as in transcriptional and translational control. This chain is Integration host factor subunit beta, found in Pseudomonas putida (strain W619).